The sequence spans 166 residues: MSSAIELKKQIVAEIAEKFRASKSTVIVDYRGLNVAEVTELRKRLREAGVEFKVYKNTLTRRALAEVGLEGLNDVFTGPNAIAFSKEDVVAPAKILSEFAKDHEALEIKAGVIEGNIATLEEINALAKLPSREGLLSMLLSVLQAPIRNFALVAKAVADKKEEQSA.

Belongs to the universal ribosomal protein uL10 family. Part of the ribosomal stalk of the 50S ribosomal subunit. The N-terminus interacts with L11 and the large rRNA to form the base of the stalk. The C-terminus forms an elongated spine to which L12 dimers bind in a sequential fashion forming a multimeric L10(L12)X complex.

Functionally, forms part of the ribosomal stalk, playing a central role in the interaction of the ribosome with GTP-bound translation factors. The polypeptide is Large ribosomal subunit protein uL10 (Geobacillus sp. (strain WCH70)).